The chain runs to 947 residues: Translation initiation factor IF-2 (947 aa).

The segment at 47–332 (LRESFGGGKS…RGRKSKRAKR (286 aa)) is disordered. Residues 86 to 95 (APDRSLDAAL) are compositionally biased toward basic and acidic residues. The segment covering 105–123 (APVPAPAPAPTPAPAPAPA) has biased composition (pro residues). The span at 131 to 145 (APPAATPAAPAASAA) shows a compositional bias: low complexity. 2 stretches are compositionally biased toward pro residues: residues 146–171 (PAPPKAPLPGQRPAPTPGKPAAPQAP) and 210–225 (PRPQAPRPGAPRPGAP). The span at 255 to 318 (RPGGGRPGGP…GAAGAFGRPG (64 aa)) shows a compositional bias: gly residues. Over residues 322–331 (RRGRKSKRAK) the composition is skewed to basic residues. Residues 443 to 614 (TRPPVVTVMG…AVLLTADAAL (172 aa)) enclose the tr-type G domain. Positions 452–459 (GHVDHGKT) are G1. Residue 452-459 (GHVDHGKT) participates in GTP binding. The interval 477-481 (GITQH) is G2. Residues 502-505 (DTPG) are G3. Residues 502–506 (DTPGH) and 556–559 (NKID) each bind GTP. The G4 stretch occupies residues 556 to 559 (NKID). Positions 592–594 (SAK) are G5.

Belongs to the TRAFAC class translation factor GTPase superfamily. Classic translation factor GTPase family. IF-2 subfamily.

The protein resides in the cytoplasm. Its function is as follows. One of the essential components for the initiation of protein synthesis. Protects formylmethionyl-tRNA from spontaneous hydrolysis and promotes its binding to the 30S ribosomal subunits. Also involved in the hydrolysis of GTP during the formation of the 70S ribosomal complex. This is Translation initiation factor IF-2 from Mycobacterium marinum (strain ATCC BAA-535 / M).